A 487-amino-acid chain; its full sequence is UDP-glucosyl transferase 73CC6 (487 aa).

The Proton acceptor role is filled by His-17. The active-site Charge relay is the Asp-114. UDP contacts are provided by Ser-282, Trp-346, Ala-347, His-364, Asn-368, Ser-369, Glu-372, and Tyr-386.

Belongs to the UDP-glycosyltransferase family. Mainly expressed in flowers and flower buds and, to a lesser extent, in leaves, stems and roots.

Its pathway is secondary metabolite biosynthesis; terpenoid biosynthesis. Functionally, component of the oleanane-type triterpene saponins (e.g. saponarioside A and saponarioside B) biosynthetic pathway, leading to the production of natural products with detergent properties used as traditional sources of soap. A glycosyltransferase that mediates the conversion of QA-di to QA-tri via the elongation of the C-3 sugar chain with a D-xylose. This is UDP-glucosyl transferase 73CC6 from Saponaria officinalis (Common soapwort).